A 169-amino-acid polypeptide reads, in one-letter code: Putative phosphoesterase SH1944 (169 aa).

His-34 acts as the Proton donor in catalysis. 2 short sequence motifs (HXTX) span residues 34-37 and 115-118; these read HITI and HFTI. His-115 (proton acceptor) is an active-site residue.

The protein belongs to the 2H phosphoesterase superfamily. YjcG family.

This Staphylococcus haemolyticus (strain JCSC1435) protein is Putative phosphoesterase SH1944.